A 141-amino-acid chain; its full sequence is Nucleoside diphosphate kinase (141 aa).

Residues lysine 11, phenylalanine 59, arginine 87, threonine 93, arginine 104, and asparagine 114 each coordinate ATP. Catalysis depends on histidine 117, which acts as the Pros-phosphohistidine intermediate.

It belongs to the NDK family. In terms of assembly, homotetramer. Mg(2+) serves as cofactor.

The protein resides in the cytoplasm. It carries out the reaction a 2'-deoxyribonucleoside 5'-diphosphate + ATP = a 2'-deoxyribonucleoside 5'-triphosphate + ADP. The enzyme catalyses a ribonucleoside 5'-diphosphate + ATP = a ribonucleoside 5'-triphosphate + ADP. In terms of biological role, major role in the synthesis of nucleoside triphosphates other than ATP. The ATP gamma phosphate is transferred to the NDP beta phosphate via a ping-pong mechanism, using a phosphorylated active-site intermediate. In Polaromonas naphthalenivorans (strain CJ2), this protein is Nucleoside diphosphate kinase.